The primary structure comprises 904 residues: MQTHEIRKRFLDHFVKAGHTEVPSASVILDDPNLLFVNAGMVQFVPFFLGQRTPPYPTATSIQKCIRTPDIDEVGITTRHNTFFQMAGNFSFGDYFKRGAIELAWALLTNSLAAGGYGLDPERIWTTVYFDDDEAVRLWQEVAGLPAERIQRRGMADNYWSMGIPGPCGPSSEIYYDRGPEFGPAGGPIVSEDRYLEVWNLVFMQNERGEGTTKEDYQILGPLPRKNIDTGMGVERIALVLQDVHNVYETDLLRPVIDTVARVAARAYDVGNHEDDVRYRIIADHSRTAAILIGDGVSPGNDGRGYVLRRLLRRVIRSAKLLGIDAAIVGDLMATVRNAMGPSYPELVADFERISRIAVAEETAFNRTLASGSRLFEEVASSTKKSGATVLSGSDAFTLHDTYGFPIELTLEMAAETGLQVDEIGFRELMAEQRRRAKADAAARKHAHADLSAYRELVDAGATEFTGFDELRSQARILGIFVDGKRVPVVAHGVAGGAGEGQRVELVLDRTPLYAESGGQIADEGTISGTGSSEAARAAVTDVQKIAKTLWVHRVNVESGEFVEGDTVIAAVDPGWRRGATQGHSGTHMVHAALRQVLGPNAVQAGSLNRPGYLRFDFNWQGPLTDDQRTQVEEVTNEAVQADFEVRTFTEQLDKAKAMGAIALFGESYPDEVRVVEMGGPFSLELCGGTHVSNTAQIGPVTILGESSIGSGVRRVEAYVGLDSFRHLAKERALMAGLASSLKVPSEEVPARVANLVERLRAAEKELERVRMASARAAATNAAAGAQRIGNVRLVAQRMSGGMTAADLRSLIGDIRGKLGSEPAVVALIAEGESQTVPYAVAANPAAQDLGIRANDLVKQLAVAVEGRGGGKADLAQGSGKNPTGIDAALDAVRSEIAVIARVG.

Zn(2+)-binding residues include histidine 584, histidine 588, cysteine 687, and histidine 691.

The protein belongs to the class-II aminoacyl-tRNA synthetase family. It depends on Zn(2+) as a cofactor.

It is found in the cytoplasm. The enzyme catalyses tRNA(Ala) + L-alanine + ATP = L-alanyl-tRNA(Ala) + AMP + diphosphate. Catalyzes the attachment of alanine to tRNA(Ala) in a two-step reaction: alanine is first activated by ATP to form Ala-AMP and then transferred to the acceptor end of tRNA(Ala). Also edits incorrectly charged Ser-tRNA(Ala) and Gly-tRNA(Ala) via its editing domain. In Mycobacterium tuberculosis (strain ATCC 25177 / H37Ra), this protein is Alanine--tRNA ligase.